The following is a 296-amino-acid chain: NAD kinase (296 aa).

Asp-72 acts as the Proton acceptor in catalysis. NAD(+)-binding positions include 72-73 (DG), 146-147 (ND), Arg-157, Lys-174, Asp-176, 187-192 (TAYALS), and Gln-247.

This sequence belongs to the NAD kinase family. A divalent metal cation serves as cofactor.

The protein localises to the cytoplasm. It catalyses the reaction NAD(+) + ATP = ADP + NADP(+) + H(+). Involved in the regulation of the intracellular balance of NAD and NADP, and is a key enzyme in the biosynthesis of NADP. Catalyzes specifically the phosphorylation on 2'-hydroxyl of the adenosine moiety of NAD to yield NADP. This Pseudomonas putida (strain ATCC 700007 / DSM 6899 / JCM 31910 / BCRC 17059 / LMG 24140 / F1) protein is NAD kinase.